Here is a 59-residue protein sequence, read N- to C-terminus: Large ribosomal subunit protein uL30 (59 aa).

It belongs to the universal ribosomal protein uL30 family. As to quaternary structure, part of the 50S ribosomal subunit.

This Mycolicibacterium vanbaalenii (strain DSM 7251 / JCM 13017 / BCRC 16820 / KCTC 9966 / NRRL B-24157 / PYR-1) (Mycobacterium vanbaalenii) protein is Large ribosomal subunit protein uL30.